The sequence spans 221 residues: ATP-dependent dethiobiotin synthetase BioD (221 aa).

11–16 (DVGKTF) lines the ATP pocket. Thr15 is a Mg(2+) binding site. Residue Lys35 is part of the active site. Thr39 is a binding site for substrate. Residues Asp44 and 103–106 (EGAG) contribute to the ATP site. Asp44 and Glu103 together coordinate Mg(2+).

It belongs to the dethiobiotin synthetase family. Homodimer. Mg(2+) is required as a cofactor.

It localises to the cytoplasm. It catalyses the reaction (7R,8S)-7,8-diammoniononanoate + CO2 + ATP = (4R,5S)-dethiobiotin + ADP + phosphate + 3 H(+). Its pathway is cofactor biosynthesis; biotin biosynthesis; biotin from 7,8-diaminononanoate: step 1/2. Its function is as follows. Catalyzes a mechanistically unusual reaction, the ATP-dependent insertion of CO2 between the N7 and N8 nitrogen atoms of 7,8-diaminopelargonic acid (DAPA, also called 7,8-diammoniononanoate) to form a ureido ring. The polypeptide is ATP-dependent dethiobiotin synthetase BioD (Leptospira interrogans serogroup Icterohaemorrhagiae serovar copenhageni (strain Fiocruz L1-130)).